The sequence spans 270 residues: Ribonuclease HII (270 aa).

Residues 84–270 (RYIAGVDEVG…HRNSFLTKLL (187 aa)) enclose the RNase H type-2 domain. Aspartate 90, glutamate 91, and aspartate 186 together coordinate a divalent metal cation.

Belongs to the RNase HII family. Mn(2+) is required as a cofactor. The cofactor is Mg(2+).

It is found in the cytoplasm. The enzyme catalyses Endonucleolytic cleavage to 5'-phosphomonoester.. Endonuclease that specifically degrades the RNA of RNA-DNA hybrids. This is Ribonuclease HII from Clostridium beijerinckii (strain ATCC 51743 / NCIMB 8052) (Clostridium acetobutylicum).